The chain runs to 244 residues: Probable fimbrial assembly protein FimC, serogroup H1 (244 aa).

The protein is Probable fimbrial assembly protein FimC, serogroup H1 (fimC) of Dichelobacter nodosus (Bacteroides nodosus).